The primary structure comprises 179 residues: MILARGEILKLIKDGSLGIEPFTEDVVRENGLDLRVGNEYAIYAFENQVIDPCELESTRHLFSIVEAKDGRIIIPPRSFALLTTMEYVKFPRDVIGFCNLRSTLARYGLGVPPTIIDTGFEGNITIEVINNSGNYVVLRPGMRFLHVVLAKTIGEAKYQGKYLGQRGVTPPKGLKGECS.

DCTP is bound by residues 101 to 106 and Asp117; that span reads RSTLAR. Residue Glu127 is the Proton donor/acceptor of the active site. Residue Gln165 coordinates dCTP.

This sequence belongs to the dCTP deaminase family. In terms of assembly, homotrimer.

The enzyme catalyses dCTP + H2O + H(+) = dUTP + NH4(+). It functions in the pathway pyrimidine metabolism; dUMP biosynthesis; dUMP from dCTP (dUTP route): step 1/2. Its function is as follows. Catalyzes the deamination of dCTP to dUTP. The polypeptide is dCTP deaminase (Caldivirga maquilingensis (strain ATCC 700844 / DSM 13496 / JCM 10307 / IC-167)).